The chain runs to 609 residues: Sodium- and chloride-dependent GABA transporter 2 (609 aa).

The span at 1 to 13 (MDSRASGTASNGE) shows a compositional bias: polar residues. The tract at residues 1–23 (MDSRASGTASNGETKPVYPVMEK) is disordered. At 1 to 40 (MDSRASGTASNGETKPVYPVMEKEEEEGTLERGHWNNKME) the chain is on the cytoplasmic side. Transmembrane regions (helical) follow at residues 41–61 (FVLS…FPYL), 68–88 (GAFF…VFLL), and 121–141 (IVIL…FYLF). The Extracellular portion of the chain corresponds to 142–206 (SSFTIDLPWG…GIQHLGALRW (65 aa)). An intrachain disulfide couples Cys-153 to Cys-162. 2 N-linked (GlcNAc...) asparagine glycosylation sites follow: Asn-169 and Asn-173. 2 helical membrane passes run 207–227 (ELAL…WKGV) and 233–253 (VVYF…IRGV). N-linked (GlcNAc...) asparagine glycosylation is present at Asn-269. 7 helical membrane passes run 282-302 (AGTQ…ALGS), 319-339 (FLNS…LGFM), 366-386 (VVML…VVLL), 418-438 (VLIL…LTEG), 453-473 (GMCL…VYGA), 490-510 (PLIK…TFLF), and 528-548 (WWGD…IPAW). Residues 549-609 (SLYRLGTLKG…LRLTELESHC (61 aa)) are Cytoplasmic-facing. A Phosphothreonine modification is found at Thr-594. Ser-598 is subject to Phosphoserine.

The protein belongs to the sodium:neurotransmitter symporter (SNF) (TC 2.A.22) family. SLC6A13 subfamily.

It localises to the cell membrane. The protein localises to the basolateral cell membrane. The catalysed reaction is 4-aminobutanoate(out) + chloride(out) + 2 Na(+)(out) = 4-aminobutanoate(in) + chloride(in) + 2 Na(+)(in). It carries out the reaction taurine(out) + chloride(out) + 2 Na(+)(out) = taurine(in) + chloride(in) + 2 Na(+)(in). It catalyses the reaction beta-alanine(out) + chloride(out) + 2 Na(+)(out) = beta-alanine(in) + chloride(in) + 2 Na(+)(in). The enzyme catalyses hypotaurine(out) + chloride(out) + 2 Na(+)(out) = hypotaurine(in) + chloride(in) + 2 Na(+)(in). Its function is as follows. Mediates sodium- and chloride-dependent transport of gamma-aminobutyric acid (GABA). Can also mediate transport of beta-alanine, taurine and hypotaurine. This Macaca fascicularis (Crab-eating macaque) protein is Sodium- and chloride-dependent GABA transporter 2 (SLC6A13).